A 314-amino-acid chain; its full sequence is tRNA dimethylallyltransferase (314 aa).

ATP is bound at residue 6–13; the sequence is GPTAVGKT. Substrate is bound at residue 8 to 13; it reads TAVGKT. The interaction with substrate tRNA stretch occupies residues 31 to 34; that stretch reads DSRQ.

Belongs to the IPP transferase family. Monomer. Mg(2+) is required as a cofactor.

It carries out the reaction adenosine(37) in tRNA + dimethylallyl diphosphate = N(6)-dimethylallyladenosine(37) in tRNA + diphosphate. Catalyzes the transfer of a dimethylallyl group onto the adenine at position 37 in tRNAs that read codons beginning with uridine, leading to the formation of N6-(dimethylallyl)adenosine (i(6)A). The chain is tRNA dimethylallyltransferase from Pseudothermotoga lettingae (strain ATCC BAA-301 / DSM 14385 / NBRC 107922 / TMO) (Thermotoga lettingae).